The following is a 325-amino-acid chain: Tagatose 1,6-diphosphate aldolase 1 (325 aa).

The protein belongs to the aldolase LacD family.

It catalyses the reaction D-tagatofuranose 1,6-bisphosphate = D-glyceraldehyde 3-phosphate + dihydroxyacetone phosphate. It participates in carbohydrate metabolism; D-tagatose 6-phosphate degradation; D-glyceraldehyde 3-phosphate and glycerone phosphate from D-tagatose 6-phosphate: step 2/2. The polypeptide is Tagatose 1,6-diphosphate aldolase 1 (lacD1) (Streptococcus mutans serotype c (strain ATCC 700610 / UA159)).